The primary structure comprises 144 residues: MIKLESLQDPSPRKRRTKLLGRGPSSGHGKTSCRGHKGDGSRSGYKRRFGYEGGGVPLYRRVPTRGFSHKRFDKCVEEITTQRLNVLFNEGEEITLDALKEKRAIDKHAIRVKVIVKGELEKTFIWKDANVVLSQGVRNLIGVA.

Residues 1–48 (MIKLESLQDPSPRKRRTKLLGRGPSSGHGKTSCRGHKGDGSRSGYKRR) form a disordered region.

Belongs to the universal ribosomal protein uL15 family. As to quaternary structure, part of the 50S ribosomal subunit.

Its function is as follows. Binds to the 23S rRNA. The polypeptide is Large ribosomal subunit protein uL15 (Chlamydia caviae (strain ATCC VR-813 / DSM 19441 / 03DC25 / GPIC) (Chlamydophila caviae)).